A 222-amino-acid chain; its full sequence is Dihydrophenazinedicarboxylate synthase (222 aa).

Serine 18 provides a ligand contact to substrate. Residues 73–76 and 88–89 contribute to the FMN site; these read RIVV and ST. Histidine 90 is a substrate binding site. FMN-binding positions include 94–95 and glutamine 117; that span reads QK. Substrate contacts are provided by arginine 139 and serine 147. FMN is bound by residues 152–153 and arginine 205; that span reads QS.

It belongs to the pyridoxamine 5'-phosphate oxidase family. Requires FMN as cofactor.

It catalyses the reaction (1R,6R)-1,4,5,5a,6,9-hexahydrophenazine-1,6-dicarboxylate + O2 = (1R,10aS)-1,4,10,10a-tetrahydrophenazine-1,6-dicarboxylate + H2O2. It carries out the reaction (1R,10aS)-1,4,10,10a-tetrahydrophenazine-1,6-dicarboxylate + O2 = (5aS)-5,5a-dihydrophenazine-1,6-dicarboxylate + H2O2. The enzyme catalyses (1R,10aS)-1,4,10,10a-tetrahydrophenazine-1-carboxylate + O2 = (10aS)-10,10a-dihydrophenazine-1-carboxylate + H2O2. The catalysed reaction is (1R)-1,4,5,10-tetrahydrophenazine-1-carboxylate + O2 = (10aS)-10,10a-dihydrophenazine-1-carboxylate + H2O2. It functions in the pathway antibiotic biosynthesis; phenazine biosynthesis. Involved in the biosynthesis of the antibiotic phenazine, a nitrogen-containing heterocyclic molecule having important roles in virulence, competition and biological control. Catalyzes several oxidations in the terminal steps of core phenazine biosynthesis. It oxidizes both hexahydrophenazine-1,6-dicarboxylic acid (HHPDC) and tetrahydrophenazine-1-carboxylic acid (THPCA) and thereby contributes to the generation of both phenazine-1,6-dicarboxylic acid (PDC) and phenazine-1-carboxylic acid (PCA). The protein is Dihydrophenazinedicarboxylate synthase of Pseudomonas chlororaphis (Pseudomonas aureofaciens).